The sequence spans 248 residues: 5'-nucleotidase SurE (248 aa).

The a divalent metal cation site is built by aspartate 8, aspartate 9, serine 39, and asparagine 91.

The protein belongs to the SurE nucleotidase family. It depends on a divalent metal cation as a cofactor.

It is found in the cytoplasm. The enzyme catalyses a ribonucleoside 5'-phosphate + H2O = a ribonucleoside + phosphate. Functionally, nucleotidase that shows phosphatase activity on nucleoside 5'-monophosphates. This Marinomonas sp. (strain MWYL1) protein is 5'-nucleotidase SurE.